A 603-amino-acid chain; its full sequence is NADH-ubiquinone oxidoreductase chain 5 (603 aa).

The next 16 helical transmembrane spans lie at 4 to 24 (FTTM…ATLI), 38 to 58 (TAIA…ICLG), 89 to 109 (FLPV…WYMA), 122 to 142 (LIFL…QLFI), 171 to 191 (AILY…WFLL), 211 to 233 (LPLL…HPWL), 241 to 261 (TPVS…FLLI), 273 to 293 (IQTL…ICAL), 301 to 320 (IVAF…IGIN), 325 to 347 (ALLH…GSII), 366 to 386 (MPLT…MPFL), 405 to 424 (NTWA…AYST), 457 to 477 (LMLG…PMSL), 488 to 508 (LAAL…NYLA), 524 to 544 (IMLG…SLLM), and 582 to 602 (GLIK…LLMI).

The protein belongs to the complex I subunit 5 family. As to quaternary structure, core subunit of respiratory chain NADH dehydrogenase (Complex I) which is composed of 45 different subunits.

The protein resides in the mitochondrion inner membrane. The enzyme catalyses a ubiquinone + NADH + 5 H(+)(in) = a ubiquinol + NAD(+) + 4 H(+)(out). Its function is as follows. Core subunit of the mitochondrial membrane respiratory chain NADH dehydrogenase (Complex I) which catalyzes electron transfer from NADH through the respiratory chain, using ubiquinone as an electron acceptor. Essential for the catalytic activity and assembly of complex I. This Pongo abelii (Sumatran orangutan) protein is NADH-ubiquinone oxidoreductase chain 5 (MT-ND5).